Here is a 165-residue protein sequence, read N- to C-terminus: Large ribosomal subunit protein uL10 (165 aa).

Belongs to the universal ribosomal protein uL10 family. In terms of assembly, part of the ribosomal stalk of the 50S ribosomal subunit. The N-terminus interacts with L11 and the large rRNA to form the base of the stalk. The C-terminus forms an elongated spine to which L12 dimers bind in a sequential fashion forming a multimeric L10(L12)X complex.

Its function is as follows. Forms part of the ribosomal stalk, playing a central role in the interaction of the ribosome with GTP-bound translation factors. The chain is Large ribosomal subunit protein uL10 from Salmonella agona (strain SL483).